Consider the following 53-residue polypeptide: uncharacterized protein (53 aa).

A helical transmembrane segment spans residues 4–24 (FILLIVGFIYGAGGVLLYSVY).

It is found in the host membrane. This is an uncharacterized protein from Acidianus bottle-shaped virus (isolate Italy/Pozzuoli) (ABV).